Reading from the N-terminus, the 77-residue chain is Omega-conotoxin-like 6 (77 aa).

A signal peptide spans 1–22; that stretch reads MKLTCVVIIAVLLLTACQLITA. The propeptide occupies 23–50; the sequence is DDSRGVQKHRSLRSTTKVSKSTSCMEAG. 3 cysteine pairs are disulfide-bonded: C46–C61, C53–C64, and C60–C71.

Belongs to the conotoxin O1 superfamily. In terms of tissue distribution, expressed by the venom duct.

Its subcellular location is the secreted. Its function is as follows. Omega-conotoxins act at presynaptic membranes, they bind and block voltage-gated calcium channels (Cav). The protein is Omega-conotoxin-like 6 of Conus striatus (Striated cone).